A 294-amino-acid polypeptide reads, in one-letter code: MPEIITPIITPFTKDNRIDKEKLKIHAENLIRKGIDKLFVNGTTGLGPSLSPEEKLENLKAVYDVTNKIIFQVGGLNLDDAIRLAKLSKDFDIVGIASYAPYYYPRMSEKHLVKYFKTLCEVSPHPVYLYNYPTATGKDIDAKVAKEIGCFTGVKDTIENIIHTLDYKRLNPNMLVYSGSDMLIATVASTGLDGNVAAGSNYLPEVTVTIKKLAMERKIDEALKLQFLHDEVIEASRIFGSLSSNYVLTKYFQGYDLGYPRPPIFPLDDEEERQLIKKVEGIRAKLVELKILKE.

Residues 43–44 (TT), 130–132 (YNY), and 155–157 (KDT) contribute to the substrate site. The active-site Schiff-base intermediate with substrate is the K155.

This sequence belongs to the DapA family. KDPG aldolase subfamily. As to quaternary structure, homotetramer; dimer of dimers.

The catalysed reaction is 2-dehydro-3-deoxy-6-phospho-D-gluconate = D-glyceraldehyde 3-phosphate + pyruvate. It carries out the reaction 2-dehydro-3-deoxy-6-phospho-D-galactonate = D-glyceraldehyde 3-phosphate + pyruvate. The protein operates within carbohydrate acid metabolism; 2-dehydro-3-deoxy-D-gluconate degradation; D-glyceraldehyde 3-phosphate and pyruvate from 2-dehydro-3-deoxy-D-gluconate: step 2/2. Involved in the degradation of glucose and galactose via the Entner-Doudoroff pathway. Catalyzes the reversible cleavage of 2-keto-3-deoxy-6-phosphogluconate (KDPG) and 2-keto-3-deoxygluconate (KDG) forming pyruvate and glyceraldehyde 3-phosphate or glyceraldehyde, respectively. It is also able to catalyze the reversible cleavage of 2-keto-3-deoxy-6-phosphogalactonate (KDPGal) and 2-keto-3-deoxygalactonate (KDGal). It is equally active with both D- and L-glyceraldehyde. In Saccharolobus solfataricus (Sulfolobus solfataricus), this protein is 2-dehydro-3-deoxy-phosphogluconate/2-dehydro-3-deoxy-6-phosphogalactonate aldolase.